The following is an 806-amino-acid chain: Acetyl-CoA decarbonylase/synthase complex subunit alpha 1 (806 aa).

[4Fe-4S] cluster-binding residues include cysteine 73, cysteine 76, cysteine 77, cysteine 79, cysteine 84, and cysteine 94. Histidine 117 is a CO binding site. The [Ni-4Fe-4S] cluster site is built by histidine 250, cysteine 278, and cysteine 323. 2 4Fe-4S ferredoxin-type domains span residues 407–436 (DEQMKEWVDKCADCGSCYLVCPEELEIPEA) and 445–475 (YSYLVDLHDQCIGCRRCEQVCKKEIPILSVI). Residues cysteine 417, cysteine 420, cysteine 423, cysteine 427, cysteine 455, cysteine 458, cysteine 461, and cysteine 465 each contribute to the [4Fe-4S] cluster site. Positions 523, 552, and 587 each coordinate [Ni-4Fe-4S] cluster.

The protein belongs to the Ni-containing carbon monoxide dehydrogenase family. As to quaternary structure, heterotetramer of two alpha and two epsilon subunits. The ACDS complex is made up of alpha, epsilon, beta, gamma and delta subunits with a probable stoichiometry of (alpha(2)epsilon(2))(4)-beta(8)-(gamma(1)delta(1))(8). It depends on [4Fe-4S] cluster as a cofactor. Requires [Ni-4Fe-4S] cluster as cofactor.

It catalyses the reaction CO + 2 oxidized [2Fe-2S]-[ferredoxin] + H2O = 2 reduced [2Fe-2S]-[ferredoxin] + CO2 + 2 H(+). It functions in the pathway one-carbon metabolism; methanogenesis from acetate. In terms of biological role, part of the ACDS complex that catalyzes the reversible cleavage of acetyl-CoA, allowing growth on acetate as sole source of carbon and energy. The alpha-epsilon subcomponent functions as a carbon monoxide dehydrogenase. In Methanosarcina thermophila, this protein is Acetyl-CoA decarbonylase/synthase complex subunit alpha 1.